The chain runs to 236 residues: Thioredoxin-like 2-2, chloroplastic (236 aa).

The N-terminal 82 residues, 1 to 82 (MAGVVRLTTT…LRRPKSQVVR (82 aa)), are a transit peptide targeting the chloroplast. Residues 83–220 (VKVDENVAET…QLELGITLQT (138 aa)) enclose the Thioredoxin domain. Active-site nucleophile residues include C135 and C138. The cysteines at positions 135 and 138 are disulfide-linked.

This sequence belongs to the thioredoxin family.

It is found in the plastid. It localises to the chloroplast. Functionally, thiol-disulfide oxidoreductase that may participate in various redox reactions. Possesses insulin disulfide bonds reducing activity. The chain is Thioredoxin-like 2-2, chloroplastic from Arabidopsis thaliana (Mouse-ear cress).